Consider the following 82-residue polypeptide: Photosystem I iron-sulfur center (82 aa).

4Fe-4S ferredoxin-type domains lie at 2–31 (AHTV…MVPW) and 40–69 (IAAA…IRVY). [4Fe-4S] cluster-binding residues include C11, C14, C17, C21, C49, C52, C55, and C59.

The cyanobacterial PSI reaction center is composed of one copy each of PsaA,B,C,D,E,F,I,J,K,L,M and X, and forms trimeric complexes. Requires [4Fe-4S] cluster as cofactor.

The protein localises to the cellular thylakoid membrane. It catalyses the reaction reduced [plastocyanin] + hnu + oxidized [2Fe-2S]-[ferredoxin] = oxidized [plastocyanin] + reduced [2Fe-2S]-[ferredoxin]. Its function is as follows. Apoprotein for the two 4Fe-4S centers FA and FB of photosystem I (PSI); essential for photochemical activity. FB is the terminal electron acceptor of PSI, donating electrons to ferredoxin. The C-terminus interacts with PsaA/B/D and helps assemble the protein into the PSI complex. Required for binding of PsaD and PsaE to PSI. PSI is a plastocyanin/cytochrome c6-ferredoxin oxidoreductase, converting photonic excitation into a charge separation, which transfers an electron from the donor P700 chlorophyll pair to the spectroscopically characterized acceptors A0, A1, FX, FA and FB in turn. The protein is Photosystem I iron-sulfur center of Synechococcus sp. (strain JA-3-3Ab) (Cyanobacteria bacterium Yellowstone A-Prime).